A 231-amino-acid polypeptide reads, in one-letter code: uncharacterized protein (231 aa).

10 to 34 provides a ligand contact to NADP(+); that stretch reads IITGASSGIGAATAKALEKQGVKVV. Serine 140 is a binding site for substrate. Tyrosine 153 acts as the Proton acceptor in catalysis.

Belongs to the short-chain dehydrogenases/reductases (SDR) family.

This is an uncharacterized protein from Staphylococcus haemolyticus (strain JCSC1435).